Reading from the N-terminus, the 302-residue chain is TATA-box-binding protein (302 aa).

2 disordered regions span residues 1-22 (MEQNNSLPPFAQGLASPQGAMT) and 50-81 (SLLEEQQRQQQQQQAASQQQGGMVGGSGQTPQ). The span at 50 to 70 (SLLEEQQRQQQQQQAASQQQG) shows a compositional bias: low complexity. A run of 2 repeats spans residues 128–204 (LQNI…ARVV) and 218–295 (IQNM…YPIL).

The protein belongs to the TBP family. In terms of tissue distribution, enriched in testis but hardly detectable in the ovary (at protein level).

The protein resides in the nucleus. Its function is as follows. General transcription factor that functions at the core of the DNA-binding multiprotein factor TFIID. Binding of TFIID to the TATA box is the initial transcriptional step of the pre-initiation complex (PIC), playing a role in the activation of eukaryotic genes transcribed by RNA polymerase II. Members of the TBP family are differentially required for transcription and development during early embryogenesis. Regulates mRNA levels in the early embryo by both transcriptional and post-transcriptional mechanisms. Required for transcription of a subset of genes at the mid-blastula transition (MBT). Negatively regulates the expression of other embryonic genes, including autoregulation of the tbp promoter itself. Also functions within a transcription-dependent mechanism to direct the temporally-regulated degradation of a subset of maternal mRNAs after the MBT. This is part of a general mechanism to regulate the maternal to zygotic transition and is required for normal embryonic development. Binds to promoters of a subset of genes. Required for gastrulation. In Danio rerio (Zebrafish), this protein is TATA-box-binding protein.